Consider the following 284-residue polypeptide: Diaminopimelate epimerase (284 aa).

Residues Asn20, Gln53, and Asn73 each coordinate substrate. The active-site Proton donor is Cys82. Residues 83-84, Asn167, Asn200, and 218-219 each bind substrate; these read GN and ER. Cys227 (proton acceptor) is an active-site residue. Position 228–229 (228–229) interacts with substrate; it reads GS.

Belongs to the diaminopimelate epimerase family. As to quaternary structure, homodimer.

It localises to the cytoplasm. It catalyses the reaction (2S,6S)-2,6-diaminopimelate = meso-2,6-diaminopimelate. Its pathway is amino-acid biosynthesis; L-lysine biosynthesis via DAP pathway; DL-2,6-diaminopimelate from LL-2,6-diaminopimelate: step 1/1. Functionally, catalyzes the stereoinversion of LL-2,6-diaminopimelate (L,L-DAP) to meso-diaminopimelate (meso-DAP), a precursor of L-lysine and an essential component of the bacterial peptidoglycan. The chain is Diaminopimelate epimerase from Xylella fastidiosa (strain M12).